The primary structure comprises 504 residues: 2,3-bisphosphoglycerate-independent phosphoglycerate mutase (504 aa).

Residues D13 and S63 each coordinate Mn(2+). Residue S63 is the Phosphoserine intermediate of the active site. Substrate-binding positions include H124, 153–154 (RD), R183, R189, 254–257 (RADR), and K330. The Mn(2+) site is built by D397, H401, D438, H439, and H457.

This sequence belongs to the BPG-independent phosphoglycerate mutase family. Monomer. The cofactor is Mn(2+).

The catalysed reaction is (2R)-2-phosphoglycerate = (2R)-3-phosphoglycerate. It functions in the pathway carbohydrate degradation; glycolysis; pyruvate from D-glyceraldehyde 3-phosphate: step 3/5. Its function is as follows. Catalyzes the interconversion of 2-phosphoglycerate and 3-phosphoglycerate. In Rhodopseudomonas palustris (strain ATCC BAA-98 / CGA009), this protein is 2,3-bisphosphoglycerate-independent phosphoglycerate mutase.